We begin with the raw amino-acid sequence, 481 residues long: CUGBP Elav-like family member 6 (481 aa).

The segment covering Met1–Ala12 has biased composition (low complexity). A disordered region spans residues Met1–Pro34. 3 consecutive RRM domains span residues Ile46–Ser127, Arg134–Thr214, and Cys396–Pro474.

Belongs to the CELF/BRUNOL family. In terms of tissue distribution, expressed mainly in kidney, brain and testis and present in other tissues albeit at lower levels. Also expressed in fetal kidney.

It localises to the nucleus. The protein localises to the cytoplasm. Functionally, RNA-binding protein implicated in the regulation of pre-mRNA alternative splicing. Mediates exon inclusion and/or exclusion in pre-mRNA that are subject to tissue-specific and developmentally regulated alternative splicing. Specifically activates exon 5 inclusion of TNNT2 in a muscle-specific splicing enhancer (MSE)-dependent manner. Promotes also exon exclusion of INSR pre-mRNA. This chain is CUGBP Elav-like family member 6 (CELF6), found in Homo sapiens (Human).